The sequence spans 86 residues: Parvalbumin beta 3 (86 aa).

An N-acetylalanine modification is found at A1. The EF-hand domain maps to 35–70; the sequence is LSPEEVKKFFAIIDQDHSGFIEEEELKLFLQTFSAG. Residues D48, D50, S52, F54, E56, and E59 each contribute to the Ca(2+) site.

This sequence belongs to the parvalbumin family.

Its function is as follows. In muscle, parvalbumin is thought to be involved in relaxation after contraction. It binds two calcium ions. This is Parvalbumin beta 3 from Merluccius hubbsi (Argentine hake).